A 252-amino-acid chain; its full sequence is Acetoacetate decarboxylase (252 aa).

Lysine 116 (schiff-base intermediate with acetoacetate) is an active-site residue.

This sequence belongs to the ADC family.

The catalysed reaction is acetoacetate + H(+) = acetone + CO2. In terms of biological role, catalyzes the conversion of acetoacetate to acetone and carbon dioxide. In Paraburkholderia xenovorans (strain LB400), this protein is Acetoacetate decarboxylase.